The chain runs to 248 residues: UPF0246 protein A1G_03985 (248 aa).

It belongs to the UPF0246 family.

This chain is UPF0246 protein A1G_03985, found in Rickettsia rickettsii (strain Sheila Smith).